Reading from the N-terminus, the 192-residue chain is dCTP deaminase, dUMP-forming (192 aa).

DCTP is bound by residues 101 to 106, D119, 127 to 129, Q148, Y162, and Q174; these read KSSLGR and TLE. E129 acts as the Proton donor/acceptor in catalysis. The interval 169-192 is disordered; that stretch reads SRYQGQRGPTPSRSWQSWRTWPTR. Polar residues predominate over residues 171-192; the sequence is YQGQRGPTPSRSWQSWRTWPTR.

It belongs to the dCTP deaminase family. In terms of assembly, homotrimer.

It catalyses the reaction dCTP + 2 H2O = dUMP + NH4(+) + diphosphate. It participates in pyrimidine metabolism; dUMP biosynthesis; dUMP from dCTP: step 1/1. Functionally, bifunctional enzyme that catalyzes both the deamination of dCTP to dUTP and the hydrolysis of dUTP to dUMP without releasing the toxic dUTP intermediate. The chain is dCTP deaminase, dUMP-forming from Salinispora tropica (strain ATCC BAA-916 / DSM 44818 / JCM 13857 / NBRC 105044 / CNB-440).